Here is a 129-residue protein sequence, read N- to C-terminus: Small ribosomal subunit protein uS11 (129 aa).

Belongs to the universal ribosomal protein uS11 family. As to quaternary structure, part of the 30S ribosomal subunit. Interacts with proteins S7 and S18. Binds to IF-3.

Its function is as follows. Located on the platform of the 30S subunit, it bridges several disparate RNA helices of the 16S rRNA. Forms part of the Shine-Dalgarno cleft in the 70S ribosome. The sequence is that of Small ribosomal subunit protein uS11 from Lawsonia intracellularis (strain PHE/MN1-00).